The following is a 252-amino-acid chain: Vacuolar-sorting protein dot2 (252 aa).

Belongs to the SNF8 family. Component of the endosomal sorting complex required for transport II (ESCRT-II).

It is found in the cytoplasm. Its subcellular location is the nucleus. The protein resides in the endosome membrane. Functionally, component of the endosomal sorting complex required for transport II (ESCRT-II), which is required for multivesicular body (MVB) formation and sorting of endosomal cargo proteins into MVBs. The MVB pathway mediates delivery of transmembrane proteins into the lumen of the lysosome for degradation. The ESCRT-II complex is probably involved in the recruitment of the ESCRT-III complex. Negatively regulates meiotic spindle pole body maturation via indirect regulation of the pcp1 gene. Required for efficient entry into pre-meiotic S phase. This is Vacuolar-sorting protein dot2 (dot2) from Schizosaccharomyces pombe (strain 972 / ATCC 24843) (Fission yeast).